The chain runs to 156 residues: Small ribosomal subunit protein uS7 (156 aa).

The protein belongs to the universal ribosomal protein uS7 family. Part of the 30S ribosomal subunit. Contacts proteins S9 and S11.

Its function is as follows. One of the primary rRNA binding proteins, it binds directly to 16S rRNA where it nucleates assembly of the head domain of the 30S subunit. Is located at the subunit interface close to the decoding center, probably blocks exit of the E-site tRNA. This chain is Small ribosomal subunit protein uS7, found in Methylobacterium nodulans (strain LMG 21967 / CNCM I-2342 / ORS 2060).